The sequence spans 1416 residues: MNNGILHQNYNSKKFDIIKISLASPEVIRSWSHGEVKKPETINYRTFKPERDGLFCAKIFGPIKDYECLCGKYKRLKHRGVVCERCGVEVEQAKVRRERMGHIDLVCPVVHIWYLKSLPSRIGLFLDMPLKNVEKVLYFESYIVTDPGMTPLEKKQLLTDDEYAEALENYGYEFEASMGAEAIRDLLADTDLETEIESLQAEYEESKSTAKKEKAIKRLRLLETFQASGNKPEWMVMTVLPVLPPDLRPLVPIEGGRFATSDLNDLYRRVINRNNRLKKLLDLNAPDIIVRNEKRMLQEAVDALLDNGRRGRAVTGSNKRPLKSLADMIKGKQGRFRQNLLGKRVDYSGRSVITVGPSLRLHECGLPKKMALELFKPFVYSKLRLGGYATTIKQAKRMVELEEAVVWDILEVVINEHPVLLNRAPTLHRLGIQAFEPKLIEGKAIQLHPLVCAAFNADFDGDQMAVHVPLTVESQLEARVLMMSTNNILSPASGQPIITPTQDIVLGLYYITREKEGARGEGKLFSNYDDVSRAYNSGTIDIHAKIKLRIDRQVFDTKGNTYNEKGVVNTTVGRALLLNILPEGLSFSLLNKVLVKKEISKIINQAFRVLGGKATVVLADKLMYAGFKYSTLSGVSVGVDDMTIPENKEAKVEEAEKEIKHITEQYQSSLITENERYNNIINIWSKTSDEVGASMMDAISKDTVMVNGENKEIESFNSVYMMAKSGARGSYNQMRQLAGMRGLMAKPDGTMIETAITANFREGLSVLQYFTSTHGARKGLADTALKTANAGYLTRRLVDVAQDLVVIEEDCGTDDGLMFSAIVEDGEVKVPLVERALGRTLAADVVTEKGVVLLEAGTLLDENLVEILDDNGIDMIKVRSPITCKTRRGLCAKCYGRDLARERKVNVGESVGVIAAQSIGEPGTQLTMRTFHTGGAASLGITVSDIKVKTAGKIKFKNIRTVTNKDGQNIVISRAGEIIVSDTMGRVREQHKIPMGAVVPLASGKGVEIGDVIATWDPHAQPLITDVAGKVVLEDVIDGITSKHTYDDLTGQQTIEITSISQRTTSKNLKPVVKVVDEKGNEIKSISLAVGAVLNVTDDSVLEVGDVVAKIPLEGSKNKDITGGLPRVAELFEARRPKDAAILSPCDGMVRLGNRDTKEKQRIEILDKSGHIAEEILLPKSRHLVVFDGEQVSKGDVLADGPTDPHDLLKYKGLEAFADYILIEAQSVYRMQGVVINDKHIETIVRQMLRKATILDEGDSKFVKDESIELVRILEENDRLAKEGKRLVEYELTLMGITRSSLSTESFLSAASFQETTRVLTEASIHSQVDQLRGLKENVLIGRLIPTGTGLAVRKESNKIEKMREELGVEDNMIFTEASSFNTEDTLFENQIEKEDKDINDDIEESLRNALESLDF.

Residues Cys-68, Cys-70, Cys-83, and Cys-86 each contribute to the Zn(2+) site. The Mg(2+) site is built by Asp-458, Asp-460, and Asp-462. Zn(2+) is bound by residues Cys-811, Cys-884, Cys-891, and Cys-894.

Belongs to the RNA polymerase beta' chain family. In terms of assembly, the RNAP catalytic core consists of 2 alpha, 1 beta, 1 beta' and 1 omega subunit. When a sigma factor is associated with the core the holoenzyme is formed, which can initiate transcription. Requires Mg(2+) as cofactor. Zn(2+) serves as cofactor.

The catalysed reaction is RNA(n) + a ribonucleoside 5'-triphosphate = RNA(n+1) + diphosphate. In terms of biological role, DNA-dependent RNA polymerase catalyzes the transcription of DNA into RNA using the four ribonucleoside triphosphates as substrates. The polypeptide is DNA-directed RNA polymerase subunit beta' (Francisella philomiragia subsp. philomiragia (strain ATCC 25017 / CCUG 19701 / FSC 153 / O#319-036)).